A 262-amino-acid polypeptide reads, in one-letter code: Octanoyltransferase (262 aa).

Residues P41–A232 form the BPL/LPL catalytic domain. Substrate is bound by residues R96–H103, A163–G165, and G176–A178. C194 (acyl-thioester intermediate) is an active-site residue.

The protein belongs to the LipB family.

It is found in the cytoplasm. It catalyses the reaction octanoyl-[ACP] + L-lysyl-[protein] = N(6)-octanoyl-L-lysyl-[protein] + holo-[ACP] + H(+). It functions in the pathway protein modification; protein lipoylation via endogenous pathway; protein N(6)-(lipoyl)lysine from octanoyl-[acyl-carrier-protein]: step 1/2. Its function is as follows. Catalyzes the transfer of endogenously produced octanoic acid from octanoyl-acyl-carrier-protein onto the lipoyl domains of lipoate-dependent enzymes. Lipoyl-ACP can also act as a substrate although octanoyl-ACP is likely to be the physiological substrate. This chain is Octanoyltransferase, found in Synechococcus sp. (strain JA-2-3B'a(2-13)) (Cyanobacteria bacterium Yellowstone B-Prime).